Reading from the N-terminus, the 361-residue chain is Chorismate synthase (361 aa).

Residues Arg-48 and Arg-54 each contribute to the NADP(+) site. FMN-binding positions include 125–127 (RSS), 238–239 (NA), Gly-278, 293–297 (KPTSS), and Arg-319.

It belongs to the chorismate synthase family. Homotetramer. FMNH2 serves as cofactor.

The enzyme catalyses 5-O-(1-carboxyvinyl)-3-phosphoshikimate = chorismate + phosphate. Its pathway is metabolic intermediate biosynthesis; chorismate biosynthesis; chorismate from D-erythrose 4-phosphate and phosphoenolpyruvate: step 7/7. Its function is as follows. Catalyzes the anti-1,4-elimination of the C-3 phosphate and the C-6 proR hydrogen from 5-enolpyruvylshikimate-3-phosphate (EPSP) to yield chorismate, which is the branch point compound that serves as the starting substrate for the three terminal pathways of aromatic amino acid biosynthesis. This reaction introduces a second double bond into the aromatic ring system. This is Chorismate synthase from Pectobacterium atrosepticum (strain SCRI 1043 / ATCC BAA-672) (Erwinia carotovora subsp. atroseptica).